Here is a 223-residue protein sequence, read N- to C-terminus: Phosphoribosylformylglycinamidine synthase subunit PurQ (223 aa).

Positions 3-223 constitute a Glutamine amidotransferase type-1 domain; sequence FAVLVFPGSN…MVNSWREQNV (221 aa). The Nucleophile role is filled by cysteine 85. Catalysis depends on residues histidine 193 and glutamate 195.

In terms of assembly, part of the FGAM synthase complex composed of 1 PurL, 1 PurQ and 2 PurS subunits.

The protein resides in the cytoplasm. It catalyses the reaction N(2)-formyl-N(1)-(5-phospho-beta-D-ribosyl)glycinamide + L-glutamine + ATP + H2O = 2-formamido-N(1)-(5-O-phospho-beta-D-ribosyl)acetamidine + L-glutamate + ADP + phosphate + H(+). The catalysed reaction is L-glutamine + H2O = L-glutamate + NH4(+). The protein operates within purine metabolism; IMP biosynthesis via de novo pathway; 5-amino-1-(5-phospho-D-ribosyl)imidazole from N(2)-formyl-N(1)-(5-phospho-D-ribosyl)glycinamide: step 1/2. Part of the phosphoribosylformylglycinamidine synthase complex involved in the purines biosynthetic pathway. Catalyzes the ATP-dependent conversion of formylglycinamide ribonucleotide (FGAR) and glutamine to yield formylglycinamidine ribonucleotide (FGAM) and glutamate. The FGAM synthase complex is composed of three subunits. PurQ produces an ammonia molecule by converting glutamine to glutamate. PurL transfers the ammonia molecule to FGAR to form FGAM in an ATP-dependent manner. PurS interacts with PurQ and PurL and is thought to assist in the transfer of the ammonia molecule from PurQ to PurL. The protein is Phosphoribosylformylglycinamidine synthase subunit PurQ of Staphylococcus haemolyticus (strain JCSC1435).